Consider the following 221-residue polypeptide: FMN-dependent NADH:quinone oxidoreductase 1 (221 aa).

Residues 17 to 19 (SAS) and 148 to 151 (SSGG) contribute to the FMN site.

The protein belongs to the azoreductase type 1 family. Homodimer. Requires FMN as cofactor.

The enzyme catalyses 2 a quinone + NADH + H(+) = 2 a 1,4-benzosemiquinone + NAD(+). It catalyses the reaction N,N-dimethyl-1,4-phenylenediamine + anthranilate + 2 NAD(+) = 2-(4-dimethylaminophenyl)diazenylbenzoate + 2 NADH + 2 H(+). Functionally, quinone reductase that provides resistance to thiol-specific stress caused by electrophilic quinones. In terms of biological role, also exhibits azoreductase activity. Catalyzes the reductive cleavage of the azo bond in aromatic azo compounds to the corresponding amines. This chain is FMN-dependent NADH:quinone oxidoreductase 1, found in Clostridium acetobutylicum (strain ATCC 824 / DSM 792 / JCM 1419 / IAM 19013 / LMG 5710 / NBRC 13948 / NRRL B-527 / VKM B-1787 / 2291 / W).